Consider the following 213-residue polypeptide: Uridine kinase (213 aa).

14–21 (GASASGKS) contacts ATP.

This sequence belongs to the uridine kinase family.

The protein localises to the cytoplasm. The enzyme catalyses uridine + ATP = UMP + ADP + H(+). It carries out the reaction cytidine + ATP = CMP + ADP + H(+). The protein operates within pyrimidine metabolism; CTP biosynthesis via salvage pathway; CTP from cytidine: step 1/3. It participates in pyrimidine metabolism; UMP biosynthesis via salvage pathway; UMP from uridine: step 1/1. This is Uridine kinase from Vibrio campbellii (strain ATCC BAA-1116).